Consider the following 291-residue polypeptide: ATP synthase gamma chain (291 aa).

It belongs to the ATPase gamma chain family. F-type ATPases have 2 components, CF(1) - the catalytic core - and CF(0) - the membrane proton channel. CF(1) has five subunits: alpha(3), beta(3), gamma(1), delta(1), epsilon(1). CF(0) has three main subunits: a, b and c.

The protein resides in the cell inner membrane. Produces ATP from ADP in the presence of a proton gradient across the membrane. The gamma chain is believed to be important in regulating ATPase activity and the flow of protons through the CF(0) complex. The chain is ATP synthase gamma chain from Ralstonia nicotianae (strain ATCC BAA-1114 / GMI1000) (Ralstonia solanacearum).